The following is a 633-amino-acid chain: MGNQMSVPLRPGDQEHDPGADTCKVTSDNECVQNGNPVVLSTRVIQHYEEVDLGISSSKDNVATSSPKTMEAQAVGDASGKNLGKEAKTKAPAARSHFFLTLSRPVPGRPGDQGTDSSAASGRFDVSPSAAPENKDPSEHGALPVAAAPGQAPDKTPGCPEAKQQTLPATGPLAPSPPESQAEAPAQDKDFGFLNRFFKLDKGRESAPVNSQPKEAKGSEDPEQATEAPAVPGNPHGVSAGEDIVDSEQRGQDVDTLSYSVPGDPEVPGTTKEDPQVVDTTENSSSIMSFFKTLVSPNKTETKKDPEDTKATKADSVCDGHAAGQKMSETQAKSKKKRLDSPRLGLSFRKLFRHKDTENSPTTSANLKSDKANFTPQETRGKTKATKSCSPPPPPPEPTSEGRDSGKEKAGPTSLPLGKLFWKKSVKEDTLSTGAEENAVCESPVETVRLEEVESSLQTVDLSEETQPEPTDVKVKEESKPRKTPLMAFLRQMSVRSSEGIPRSEESNVKDSSCQTSNSVEKTPSPPEPEPAGTAQKNKETSSSKDKKSVDKKSATENSKQKNGKQEVREPAPCVQPPTVEANAMQTGDKTPKKSEKRRQSLGGFLKGLGPKRMSDAQVQTDPVSIGPVGKSK.

2 disordered regions span residues Met-1–Asn-34 and Ser-57–Trp-422. 2 stretches are compositionally biased toward polar residues: residues Lys-24–Asn-34 and Ser-57–Lys-68. The residue at position 127 (Ser-127) is a Phosphoserine. A compositionally biased stretch (polar residues) spans Val-278–Met-288. Residues Thr-300–Cys-318 show a composition bias toward basic and acidic residues. Ser-328 is subject to Phosphoserine. At Thr-330 the chain carries Phosphothreonine. The segment covering Asn-359 to Glu-378 has biased composition (polar residues). Residue Ser-360 is modified to Phosphoserine. Residues Ser-400–Ala-410 are compositionally biased toward basic and acidic residues. Residues Ser-425 and Ser-443 each carry the phosphoserine modification. The tract at residues Glu-454 to Lys-633 is disordered. Residues Thr-471–Pro-481 are compositionally biased toward basic and acidic residues. Polar residues predominate over residues Lys-510–Lys-522. At Thr-523 the chain carries Phosphothreonine. Residue Ser-525 is modified to Phosphoserine. A compositionally biased stretch (basic and acidic residues) spans Lys-537–Ala-555. 2 positions are modified to phosphoserine: Ser-601 and Ser-615. Residues Met-614–Lys-633 are interacts with DYNLL1 AND DYNLL2.

As to quaternary structure, homodimer. Interacts with DYNLL1 and DYNLL2. In terms of tissue distribution, highly expressed in the brain and, more specifically, in oligodendrocytes. Expressed in the Schwann cells (at protein level).

Its subcellular location is the cytoplasm. Required for myelination. The polypeptide is Breast carcinoma-amplified sequence 1 homolog (Bcas1) (Mus musculus (Mouse)).